Here is a 488-residue protein sequence, read N- to C-terminus: RNA binding exosome specificity factor Mmi1 (488 aa).

Polar residues-rich tracts occupy residues 1 to 14 (MSNT…SSKS), 33 to 47 (LNES…TTHT), and 54 to 66 (SVLS…NFSS). 2 disordered regions span residues 1 to 20 (MSNT…ELPN) and 25 to 80 (RSLW…DAPI). Over residues 71–80 (PAPESHDAPI) the composition is skewed to basic and acidic residues. The interaction with erh1 stretch occupies residues 95–122 (GKYDFSRHCTDYGHSYEWPYFRSLRRES). Disordered stretches follow at residues 163–185 (SRLH…RRLA) and 225–261 (SYPV…TRAS). At Thr176 the chain carries Phosphothreonine. Phosphoserine occurs at positions 178, 230, 231, 261, 263, and 265. Residues 289–299 (SYLLSNSSNDS) show a composition bias toward low complexity. The interval 289-328 (SYLLSNSSNDSASRKEKPKARASTPPPLNFSRASEHRNEK) is disordered. Residue Ser311 is modified to Phosphoserine. Phosphothreonine is present on Thr312. Residues 350 to 476 (SRYFIMLCDN…DEGSRLCTLI (127 aa)) form the YTH domain.

Component of the erh1-mmi1 complex composed of mmi1 and erh1. Interacts (via N-terminus) with erh1 in a 2:2 stoichiometry. Interacts with rrp6.

It is found in the nucleus. RNA-binding protein that recognizes and binds N6-methyladenosine (m6A)-containing RNAs, a modification present at internal sites of mRNAs and some non-coding RNAs. Functions alone and as part of the erh1-mmi1 complex, to recruit the CCR4-NOT complex and the NURS complex to target RNAs. Suppresses the meiotic program during vegetative growth and promotes the meiotic program during mating. Binds to DSR (determinant of selective removal) regions in meiotic mRNA, and recruits the NURS complex to targets. Recruitment of NURS complex to target mRNAs promotes mRNA decay by engagement of the nuclear exosome, and formation of heterochromatin islands at meiotic genes silenced by the exosome. Recruitment of the CCR4-NOT complex to target RNAs promotes heterochromatin formation at RNAi-dependent heterochromatin domains (HOODs), including a subset of meiotic genes, lncRNAs and retrotransposons. Recruitment of the CCR4-NOT complex to rDNA promotes rDNA heterochromatin assembly. Promotes non-canonical transcription termination at meiotic genes and prevents lncRNA transcription from invading and repressing adjacent genes. The sequence is that of RNA binding exosome specificity factor Mmi1 (mmi1) from Schizosaccharomyces pombe (strain 972 / ATCC 24843) (Fission yeast).